Reading from the N-terminus, the 563-residue chain is Mitochondrial distribution and morphology protein 34 (563 aa).

Positions 1 to 195 constitute an SMP-LTD domain; that stretch reads MAFNFNWSPL…LPAIIHRLSL (195 aa). Disordered regions lie at residues 298–460 and 535–563; these read ERGD…QIPT and RHDKTAREGFWSTSSNGDDAPPAYEPKAL. Composition is skewed to polar residues over residues 303–332 and 346–357; these read AGTTTPATTSLHRPQSSLGGQSTTYTFSNR and SLVNMNSATTGL. The span at 365 to 383 shows a compositional bias: basic residues; sequence SRSHTTRKKKNRVVNLRKS. Composition is skewed to polar residues over residues 386 to 402 and 444 to 460; these read TDNVSESGESETASITA and PSRSITPEQGNMNQIPT.

Belongs to the MDM34 family. Component of the ER-mitochondria encounter structure (ERMES) or MDM complex, composed of mmm1, mdm10, mdm12 and mdm34.

The protein localises to the mitochondrion outer membrane. In terms of biological role, component of the ERMES/MDM complex, which serves as a molecular tether to connect the endoplasmic reticulum (ER) and mitochondria. Components of this complex are involved in the control of mitochondrial shape and protein biogenesis, and function in nonvesicular lipid trafficking between the ER and mitochondria. Mdm34 is required for the interaction of the ER-resident membrane protein mmm1 and the outer mitochondrial membrane-resident beta-barrel protein mdm10. The polypeptide is Mitochondrial distribution and morphology protein 34 (Sclerotinia sclerotiorum (strain ATCC 18683 / 1980 / Ss-1) (White mold)).